We begin with the raw amino-acid sequence, 97 residues long: Large ribosomal subunit protein eL21 (97 aa).

The segment at 1 to 24 (MQKSEGFRSKTRYKLQKHPRQKGM) is disordered. Residues 9 to 21 (SKTRYKLQKHPRQ) are compositionally biased toward basic residues.

The protein belongs to the eukaryotic ribosomal protein eL21 family.

The polypeptide is Large ribosomal subunit protein eL21 (Methanococcus maripaludis (strain DSM 14266 / JCM 13030 / NBRC 101832 / S2 / LL)).